The sequence spans 360 residues: DNA replication and repair protein RecF (360 aa).

Residue 33-40 (GENGSGKT) participates in ATP binding.

The protein belongs to the RecF family.

Its subcellular location is the cytoplasm. The RecF protein is involved in DNA metabolism; it is required for DNA replication and normal SOS inducibility. RecF binds preferentially to single-stranded, linear DNA. It also seems to bind ATP. The chain is DNA replication and repair protein RecF from Rickettsia peacockii (strain Rustic).